The chain runs to 803 residues: Zinc finger protein 226 (803 aa).

One can recognise a KRAB domain in the interval 8–78 (VTFKDVAVAF…TTATRRQGNL (71 aa)). The C2H2-type 1; degenerate zinc finger occupies 252–274 (YQCNECKKPFSDLSSFDLHQQLQ). The C2H2-type 2; degenerate zinc-finger motif lies at 280–302 (LTCVERGKGFCYSPVLPVHQKVH). C2H2-type zinc fingers lie at residues 307–329 (LKCDECGKEFSQGAHLQTHQKVH), 335–357 (YKCKQCGKGFSRRSALNVHCKVH), 363–385 (YNCEECGRAFSQASHLQDHQRLH), 391–413 (FKCDACGKSFSRNSHLQSHQRVH), 419–441 (YKCEECGKGFICSSNLYIHQRVH), 447–469 (YKCEECGKGFSRPSSLQAHQGVH), 475–497 (YICTVCGKGFTLSSNLQAHQRVH), 503–525 (YKCNECGKSFRRNSHYQVHLVVH), 531–553 (YKCEICGKGFSQSSYLQIHQKAH), 559–581 (FKCEECGQGFNQSSRLQIHQLIH), 587–609 (YKCEECGKGFSRRADLKIHCRIH), 615–637 (YNCEECGKVFRQASNLLAHQRVH), 643–665 (FKCEECGKSFGRSAHLQAHQKVH), 671–693 (YKCDECGKGFKWSLNLDMHQRVH), 699–721 (YKCGECGKYFSQASSLQLHQSVH), 727–749 (YKCDVCGKVFSRSSQLQSHQRVH), and 755–777 (YKCEICGKSFSWRSNLTVHHRIH). The interval 781–803 (KSYKSNRGGKNIRESTQEKKSIK) is disordered. Positions 791–803 (NIRESTQEKKSIK) are enriched in basic and acidic residues.

The protein belongs to the krueppel C2H2-type zinc-finger protein family.

It localises to the nucleus. Functionally, may be involved in transcriptional regulation. In Homo sapiens (Human), this protein is Zinc finger protein 226 (ZNF226).